We begin with the raw amino-acid sequence, 424 residues long: 3-isopropylmalate dehydratase large subunit (424 aa).

The [4Fe-4S] cluster site is built by Cys-299, Cys-359, and Cys-362.

It belongs to the aconitase/IPM isomerase family. LeuC type 2 subfamily. Heterodimer of LeuC and LeuD. Requires [4Fe-4S] cluster as cofactor.

The catalysed reaction is (2R,3S)-3-isopropylmalate = (2S)-2-isopropylmalate. The protein operates within amino-acid biosynthesis; L-leucine biosynthesis; L-leucine from 3-methyl-2-oxobutanoate: step 2/4. In terms of biological role, catalyzes the isomerization between 2-isopropylmalate and 3-isopropylmalate, via the formation of 2-isopropylmaleate. The chain is 3-isopropylmalate dehydratase large subunit from Hydrogenobaculum sp. (strain Y04AAS1).